Here is a 989-residue protein sequence, read N- to C-terminus: DNA-directed RNA polymerase subunit beta' (989 aa).

3 residues coordinate Mg(2+): Asp383, Asp385, and Asp387.

The protein belongs to the RNA polymerase beta' chain family. The RNAP catalytic core consists of 2 alpha, 1 beta, 1 beta' and 1 omega subunit. When a sigma factor is associated with the core the holoenzyme is formed, which can initiate transcription. Mg(2+) serves as cofactor.

The catalysed reaction is RNA(n) + a ribonucleoside 5'-triphosphate = RNA(n+1) + diphosphate. In terms of biological role, DNA-dependent RNA polymerase catalyzes the transcription of DNA into RNA using the four ribonucleoside triphosphates as substrates. The sequence is that of DNA-directed RNA polymerase subunit beta' (rpoC) from Leuconostoc pseudomesenteroides.